The primary structure comprises 144 residues: MKIQIHNHTSFKIDSYQQLLIQLFSQIKENNQMHLVFVTKEKIKQLNTFFRKKNFVTDVLSFPNEFSFNPNLKDDSLGDVFICFEQAQLQAQKLLHSLEREIAFLVVHGFLHLKGYQHNNEEELEKMIHLQEKILKKINLERKK.

Zn(2+)-binding residues include histidine 108, histidine 112, and histidine 118.

This sequence belongs to the endoribonuclease YbeY family. It depends on Zn(2+) as a cofactor.

It is found in the cytoplasm. Single strand-specific metallo-endoribonuclease involved in late-stage 70S ribosome quality control and in maturation of the 3' terminus of the 16S rRNA. This is Endoribonuclease YbeY from Phytoplasma australiense.